Reading from the N-terminus, the 377-residue chain is Peroxisomal membrane protein PEX14 (377 aa).

Positions 1–15 (MASSEQAEQPSQPSS) are enriched in low complexity. Residues 1 to 24 (MASSEQAEQPSQPSSTPGSENVLP) are disordered. Ala-2 carries the post-translational modification N-acetylalanine. The Peroxisomal matrix portion of the chain corresponds to 2–108 (ASSEQAEQPS…YSPAGSRWRD (107 aa)). Lys-34 carries the post-translational modification N6-acetyllysine. The helical transmembrane segment at 109–126 (YGALAIIMAGIAFGFHQL) threads the bilayer. Residues 127-377 (YKKYLLPLIL…EGASNESERD (251 aa)) are Cytoplasmic-facing. Residues 230-377 (PPSPSAPKIP…EGASNESERD (148 aa)) are disordered. Ser-232 is subject to Phosphoserine. Low complexity-rich tracts occupy residues 244–259 (PVKS…VNHH) and 265–275 (SPVSNESTSSS). Phosphoserine occurs at positions 282 and 335. Residues 323-342 (KEDEEDEEDDDVSHVDEEDC) are compositionally biased toward acidic residues. The span at 360 to 377 (QVEKLRRPEGASNESERD) shows a compositional bias: basic and acidic residues.

It belongs to the peroxin-14 family. As to quaternary structure, interacts with PEX13; forming the PEX13-PEX14 docking complex. Interacts with PEX5 (via WxxxF/Y motifs). Interacts with PEX19. Interacts with tubulin.

It is found in the peroxisome membrane. In terms of biological role, component of the PEX13-PEX14 docking complex, a translocon channel that specifically mediates the import of peroxisomal cargo proteins bound to PEX5 receptor. The PEX13-PEX14 docking complex forms a large import pore which can be opened to a diameter of about 9 nm. Mechanistically, PEX5 receptor along with cargo proteins associates with the PEX14 subunit of the PEX13-PEX14 docking complex in the cytosol, leading to the insertion of the receptor into the organelle membrane with the concomitant translocation of the cargo into the peroxisome matrix. Plays a key role for peroxisome movement through a direct interaction with tubulin. In Homo sapiens (Human), this protein is Peroxisomal membrane protein PEX14.